We begin with the raw amino-acid sequence, 384 residues long: Opsin-3 (384 aa).

At Met1–Ala62 the chain is on the extracellular side. A glycan (N-linked (GlcNAc...) asparagine) is linked at Asn4. The helical transmembrane segment at Leu63 to Phe83 threads the bilayer. Topologically, residues Ser84–Asn94 are cytoplasmic. A helical membrane pass occupies residues Met95–Ile115. Topologically, residues Met116–Val132 are extracellular. An intrachain disulfide couples Cys130 to Cys207. A helical transmembrane segment spans residues Tyr133–Phe153. The Cytoplasmic portion of the chain corresponds to Asp154 to Gln171. Residues Ala172–Phe192 traverse the membrane as a helical segment. The Extracellular portion of the chain corresponds to Arg193–Glu219. Residues Val220–Phe240 form a helical membrane-spanning segment. The Cytoplasmic portion of the chain corresponds to Tyr241 to Lys284. Residues Val285–Met305 traverse the membrane as a helical segment. Residues Thr306–Arg312 are Extracellular-facing. A helical transmembrane segment spans residues Thr313 to Ile333. Topologically, residues Asp334 to Ala384 are cytoplasmic.

Belongs to the G-protein coupled receptor 1 family. Opsin subfamily. In the retina, expression is essentially uniformly distributed but a higher level is seen in the ventral region where the B-cells are localized.

It localises to the membrane. Its function is as follows. Visual pigments are the light-absorbing molecules that mediate vision. They consist of an apoprotein, opsin, covalently linked to cis-retinal. May play a role in photoperiodic photoreception. The protein is Opsin-3 (OP3) of Manduca sexta (Tobacco hawkmoth).